The primary structure comprises 436 residues: GTPase Der (436 aa).

2 EngA-type G domains span residues 4–167 (PVVA…KNIP) and 176–351 (VQFC…ENHS). Residues 10–17 (GRPNVGKS), 57–61 (DTGGI), 119–122 (NKLD), 182–189 (GRPNVGKS), 229–233 (DTAGM), and 294–297 (NKWD) contribute to the GTP site. Positions 352-436 (LRVQTNVLND…PIKIFARARK (85 aa)) constitute a KH-like domain.

Belongs to the TRAFAC class TrmE-Era-EngA-EngB-Septin-like GTPase superfamily. EngA (Der) GTPase family. Associates with the 50S ribosomal subunit.

Functionally, GTPase that plays an essential role in the late steps of ribosome biogenesis. The polypeptide is GTPase Der (Bacillus velezensis (strain DSM 23117 / BGSC 10A6 / LMG 26770 / FZB42) (Bacillus amyloliquefaciens subsp. plantarum)).